Here is a 432-residue protein sequence, read N- to C-terminus: Adenylosuccinate synthetase (432 aa).

Residues 13–19 and 41–43 contribute to the GTP site; these read GDEGKGK and GHT. D14 functions as the Proton acceptor in the catalytic mechanism. Residues D14 and G41 each coordinate Mg(2+). IMP-binding positions include 14–17, 39–42, T130, R144, Q225, T240, and R304; these read DEGK and NAGH. H42 serves as the catalytic Proton donor. 300 to 306 contributes to the substrate binding site; that stretch reads ATTGRKR. GTP is bound by residues R306, 332–334, and 415–417; these read KLD and STG.

Belongs to the adenylosuccinate synthetase family. In terms of assembly, homodimer. Mg(2+) is required as a cofactor.

The protein resides in the cytoplasm. It catalyses the reaction IMP + L-aspartate + GTP = N(6)-(1,2-dicarboxyethyl)-AMP + GDP + phosphate + 2 H(+). It functions in the pathway purine metabolism; AMP biosynthesis via de novo pathway; AMP from IMP: step 1/2. Functionally, plays an important role in the de novo pathway of purine nucleotide biosynthesis. Catalyzes the first committed step in the biosynthesis of AMP from IMP. This is Adenylosuccinate synthetase from Vibrio cholerae serotype O1 (strain ATCC 39541 / Classical Ogawa 395 / O395).